The following is a 122-amino-acid chain: Ribosome-binding factor A (122 aa).

The protein belongs to the RbfA family. Monomer. Binds 30S ribosomal subunits, but not 50S ribosomal subunits or 70S ribosomes.

The protein resides in the cytoplasm. Functionally, one of several proteins that assist in the late maturation steps of the functional core of the 30S ribosomal subunit. Associates with free 30S ribosomal subunits (but not with 30S subunits that are part of 70S ribosomes or polysomes). Required for efficient processing of 16S rRNA. May interact with the 5'-terminal helix region of 16S rRNA. This is Ribosome-binding factor A from Halothermothrix orenii (strain H 168 / OCM 544 / DSM 9562).